Reading from the N-terminus, the 166-residue chain is UPF0304 protein VP0990 (166 aa).

Belongs to the UPF0304 family.

This is UPF0304 protein VP0990 from Vibrio parahaemolyticus serotype O3:K6 (strain RIMD 2210633).